A 295-amino-acid chain; its full sequence is Ribose-phosphate pyrophosphokinase (295 aa).

ATP-binding positions include 46–48 (DGE) and 101–102 (RQ). Mg(2+) contacts are provided by His132 and Asp171. Lys194 is a catalytic residue. Arg196 and Asp220 together coordinate D-ribose 5-phosphate.

This sequence belongs to the ribose-phosphate pyrophosphokinase family. Class III (archaeal) subfamily. Requires Mg(2+) as cofactor.

The protein resides in the cytoplasm. It carries out the reaction D-ribose 5-phosphate + ATP = 5-phospho-alpha-D-ribose 1-diphosphate + AMP + H(+). The protein operates within metabolic intermediate biosynthesis; 5-phospho-alpha-D-ribose 1-diphosphate biosynthesis; 5-phospho-alpha-D-ribose 1-diphosphate from D-ribose 5-phosphate (route I): step 1/1. Involved in the biosynthesis of the central metabolite phospho-alpha-D-ribosyl-1-pyrophosphate (PRPP) via the transfer of pyrophosphoryl group from ATP to 1-hydroxyl of ribose-5-phosphate (Rib-5-P). This chain is Ribose-phosphate pyrophosphokinase, found in Methanosarcina mazei (strain ATCC BAA-159 / DSM 3647 / Goe1 / Go1 / JCM 11833 / OCM 88) (Methanosarcina frisia).